The following is a 122-amino-acid chain: Putative TLX1 neighbor protein (122 aa).

The tract at residues 21–122 (SLLSQEAMGP…LGGGRGQRGQ (102 aa)) is disordered. Gly residues predominate over residues 113–122 (LGGGRGQRGQ).

In Homo sapiens (Human), this protein is Putative TLX1 neighbor protein (TLX1NB).